A 727-amino-acid polypeptide reads, in one-letter code: FACT complex subunit Ssrp1 (727 aa).

Disordered regions lie at residues 458-565 and 596-727; these read AEAR…AFML and ELKD…EGSD. Composition is skewed to acidic residues over residues 464–479 and 487–508; these read EEEDDDGDDSDEESTD and NESDVAEEYDSNVEDDSDDDSD. A compositionally biased stretch (gly residues) spans 510–519; sequence SGGGGDGGTD. 3 stretches are compositionally biased toward basic and acidic residues: residues 529-555, 596-620, and 675-703; these read KKNEKKEKTHKEKEKIKKPTKKKDTGK, ELKDKSKWEEAANKDKIRYQEEMRN, and DQEKVKEIPKKKNKSTAEDKDKNSKKSES. The segment at residues 556 to 622 is a DNA-binding region (HMG box); that stretch reads PKRGTSAFML…RYQEEMRNYK (67 aa). Acidic residues predominate over residues 704 to 727; that stretch reads EGGDSDDASNASEDDDEEEDEGSD.

Belongs to the SSRP1 family. As to quaternary structure, component of the FACT complex, a stable heterodimer of dre4/spt16 and Ssrp.

The protein resides in the nucleus. It is found in the chromosome. Its subcellular location is the nucleolus. Functionally, component of the FACT complex, a general chromatin factor that acts to reorganize nucleosomes. The FACT complex is involved in multiple processes that require DNA as a template such as mRNA elongation, DNA replication and DNA repair. During transcription elongation the FACT complex acts as a histone chaperone that both destabilizes and restores nucleosomal structure. It facilitates the passage of RNA polymerase II and transcription by promoting the dissociation of one histone H2A-H2B dimer from the nucleosome, then subsequently promotes the reestablishment of the nucleosome following the passage of RNA polymerase II. Binds specifically to single-stranded DNA and RNA with highest affinity for nucleotides G and U. The FACT complex is required for expression of Hox genes. The sequence is that of FACT complex subunit Ssrp1 (Ssrp) from Drosophila pseudoobscura pseudoobscura (Fruit fly).